The primary structure comprises 727 residues: Translation initiation factor IF-2, mitochondrial (727 aa).

Residues 1 to 29 (MNRKILKLENLLRFHTICRQLHSLCQRRM) constitute a mitochondrion transit peptide. In terms of domain architecture, tr-type G spans 178–348 (PRSPVVTIMG…IALAEMLELK (171 aa)). The G1 stretch occupies residues 187–194 (GHVDHGKT). A GTP-binding site is contributed by 187 to 194 (GHVDHGKT). Positions 212–216 (GITQH) are G2. Residues 234–237 (DTPG) and 288–291 (NKCD) each bind GTP. The tract at residues 234 to 237 (DTPG) is G3. The interval 288–291 (NKCD) is G4. Positions 324–326 (SAL) are G5. Phosphothreonine is present on Thr-688.

The protein belongs to the TRAFAC class translation factor GTPase superfamily. Classic translation factor GTPase family. IF-2 subfamily. Monomer.

The protein resides in the mitochondrion. One of the essential components for the initiation of protein synthesis. Protects formylmethionyl-tRNA from spontaneous hydrolysis and promotes its binding to the 30S ribosomal subunits. Also involved in the hydrolysis of GTP during the formation of the 70S ribosomal complex. The sequence is that of Translation initiation factor IF-2, mitochondrial (MTIF2) from Bos taurus (Bovine).